Reading from the N-terminus, the 275-residue chain is MEMO1 family protein Nmar_0215 (275 aa).

This sequence belongs to the MEMO1 family.

In Nitrosopumilus maritimus (strain SCM1), this protein is MEMO1 family protein Nmar_0215.